The chain runs to 308 residues: D-alanine--D-alanine ligase (308 aa).

Positions 105 to 302 (KAIFRSLGLA…FPDLCERILD (198 aa)) constitute an ATP-grasp domain. 133–188 (DLPFGLPCVVKPAGEGSSVGVHLVNEAAELGPACRDAASHAGDVIVERYVKGTEVD) lines the ATP pocket. Mg(2+) contacts are provided by aspartate 256, glutamate 269, and asparagine 271.

It belongs to the D-alanine--D-alanine ligase family. It depends on Mg(2+) as a cofactor. Mn(2+) serves as cofactor.

It is found in the cytoplasm. The catalysed reaction is 2 D-alanine + ATP = D-alanyl-D-alanine + ADP + phosphate + H(+). The protein operates within cell wall biogenesis; peptidoglycan biosynthesis. Functionally, cell wall formation. This Anaeromyxobacter dehalogenans (strain 2CP-1 / ATCC BAA-258) protein is D-alanine--D-alanine ligase.